Reading from the N-terminus, the 202-residue chain is Imidazoleglycerol-phosphate dehydratase (202 aa).

It belongs to the imidazoleglycerol-phosphate dehydratase family.

It is found in the cytoplasm. The catalysed reaction is D-erythro-1-(imidazol-4-yl)glycerol 3-phosphate = 3-(imidazol-4-yl)-2-oxopropyl phosphate + H2O. It functions in the pathway amino-acid biosynthesis; L-histidine biosynthesis; L-histidine from 5-phospho-alpha-D-ribose 1-diphosphate: step 6/9. The sequence is that of Imidazoleglycerol-phosphate dehydratase from Acinetobacter baumannii (strain SDF).